The primary structure comprises 68 residues: Pleurocidin (68 aa).

The signal sequence occupies residues 1–22 (MKFTATFLMIAIFVLMVEPGEC). A propeptide spanning residues 48 to 68 (GDKQELNKRAVDEDPNVIVFE) is cleaved from the precursor.

The protein belongs to the pleurocidin family. As to expression, goblet cells.

It is found in the secreted. In terms of biological role, antimicrobial peptide with potent activity against Gram-positive and Gram-negative bacteria. Activity against E.coli and B.subtilis. Weaker activity against L.mucor, s.marcescens and P.aeruginosa. May play a role in innate host defense. This chain is Pleurocidin (ple2), found in Pseudopleuronectes americanus (Winter flounder).